A 243-amino-acid polypeptide reads, in one-letter code: MDKKELINNGKVKSVYTTDDENAVIIEFRDDMTAGDGARKEVMNKKGSYNALISTKLFKVLEENGIKTQFIDLPETNVMVAKKLEMIPIEVIVRNIATGSLIRKYPIADGTKLDPPIVQMDFKADEFHDPMLNDSIIKALGLATQEEIDELTEKALKINEVLSEFLLEAGIILVDFKVEFGKDKNGEIILGDEISPDGCRLWDSETLDMLDKELFRKGKDNEVMDAYVEVYNRIIPDDEKIEL.

It belongs to the SAICAR synthetase family.

The enzyme catalyses 5-amino-1-(5-phospho-D-ribosyl)imidazole-4-carboxylate + L-aspartate + ATP = (2S)-2-[5-amino-1-(5-phospho-beta-D-ribosyl)imidazole-4-carboxamido]succinate + ADP + phosphate + 2 H(+). The protein operates within purine metabolism; IMP biosynthesis via de novo pathway; 5-amino-1-(5-phospho-D-ribosyl)imidazole-4-carboxamide from 5-amino-1-(5-phospho-D-ribosyl)imidazole-4-carboxylate: step 1/2. This Methanobrevibacter smithii (strain ATCC 35061 / DSM 861 / OCM 144 / PS) protein is Phosphoribosylaminoimidazole-succinocarboxamide synthase.